Consider the following 210-residue polypeptide: Ribosomal RNA large subunit methyltransferase E (210 aa).

S-adenosyl-L-methionine-binding residues include G61, W63, D81, D97, and D122. The Proton acceptor role is filled by K162. Over residues 187–196 (KPEASRKRSP) the composition is skewed to basic and acidic residues. Residues 187-210 (KPEASRKRSPEVYALGQGKRAHMK) are disordered.

It belongs to the class I-like SAM-binding methyltransferase superfamily. RNA methyltransferase RlmE family.

The protein resides in the cytoplasm. The catalysed reaction is uridine(2552) in 23S rRNA + S-adenosyl-L-methionine = 2'-O-methyluridine(2552) in 23S rRNA + S-adenosyl-L-homocysteine + H(+). Its function is as follows. Specifically methylates the uridine in position 2552 of 23S rRNA at the 2'-O position of the ribose in the fully assembled 50S ribosomal subunit. This is Ribosomal RNA large subunit methyltransferase E from Stenotrophomonas maltophilia (strain R551-3).